Consider the following 41-residue polypeptide: Photosystem I reaction center subunit IX (41 aa).

The helical transmembrane segment at 7 to 27 (YLSTAPVLATVWMIITAGILI) threads the bilayer.

The protein belongs to the PsaJ family.

It localises to the cellular thylakoid membrane. May help in the organization of the PsaE and PsaF subunits. The sequence is that of Photosystem I reaction center subunit IX from Trichodesmium erythraeum (strain IMS101).